A 714-amino-acid polypeptide reads, in one-letter code: BBSome complex member bbs-2 (714 aa).

Coiled-coil stretches lie at residues 332 to 361 (IREF…VEKD) and 597 to 627 (MTEV…DSIA).

Part of BBSome complex, that contains at least bbs-1, bbs-2, bbs-4, bbs-5, osm-12, bbs-8/ttc-8 and bbs-9. Expressed in ciliated cells including amphid and both inner and outer labial neurons of the head and in both phasmid neurons PHA and PHB in the tail at larval stages L1 and L2.

It is found in the cell projection. It localises to the cilium. Its subcellular location is the cytoplasm. The protein localises to the cytoskeleton. The protein resides in the cilium basal body. It is found in the cilium axoneme. In terms of biological role, component of the BBSome complex. The BBSome complex is thought to function as a coat complex required for sorting of specific membrane proteins to the primary cilia. The BBSome complex is required for ciliogenesis but is dispensable for centriolar satellite function. Required for proper BBSome complex assembly and its ciliary localization. Required for cilia biogenesis and both the assembly and movement of intraflagellar transport proteins along the ciliary axoneme. The polypeptide is BBSome complex member bbs-2 (Caenorhabditis elegans).